A 188-amino-acid chain; its full sequence is GMP synthase [glutamine-hydrolyzing] subunit A (188 aa).

Positions Lys-2–Lys-188 constitute a Glutamine amidotransferase type-1 domain. Cys-79 functions as the Nucleophile in the catalytic mechanism. Catalysis depends on residues His-166 and Glu-168.

In terms of assembly, heterodimer composed of a glutamine amidotransferase subunit (A) and a GMP-binding subunit (B).

The enzyme catalyses XMP + L-glutamine + ATP + H2O = GMP + L-glutamate + AMP + diphosphate + 2 H(+). Its pathway is purine metabolism; GMP biosynthesis; GMP from XMP (L-Gln route): step 1/1. In terms of biological role, catalyzes the synthesis of GMP from XMP. This Sulfolobus acidocaldarius (strain ATCC 33909 / DSM 639 / JCM 8929 / NBRC 15157 / NCIMB 11770) protein is GMP synthase [glutamine-hydrolyzing] subunit A.